Consider the following 178-residue polypeptide: DELTA-miturgitoxin-Cp3a (178 aa).

Positions Met1 to Ser18 are cleaved as a signal peptide. The propeptide occupies Glu19 to Arg46. Positions Glu43–Arg46 match the Processing quadruplet motif motif. Intrachain disulfides connect Cys48–Cys63, Cys55–Cys72, Cys62–Cys86, Cys74–Cys84, Cys113–Cys128, Cys120–Cys137, Cys127–Cys155, and Cys139–Cys153.

The protein belongs to the spider toxin CSTX family. Double-CSTX subfamily. In terms of processing, cleavage of the propeptide depends on the processing quadruplet motif (XXXR, with at least one of X being E). In terms of tissue distribution, expressed by the venom gland.

Its subcellular location is the secreted. Functionally, spider venom toxin that exhibits cytolytic activity by forming an alpha-helix across the membrane. Lethal to insect larvae. The sequence is that of DELTA-miturgitoxin-Cp3a from Cheiracanthium punctorium (Yellow sac spider).